A 362-amino-acid chain; its full sequence is Cobalt-precorrin-5B C(1)-methyltransferase (362 aa).

The protein belongs to the CbiD family.

It catalyses the reaction Co-precorrin-5B + S-adenosyl-L-methionine = Co-precorrin-6A + S-adenosyl-L-homocysteine. The protein operates within cofactor biosynthesis; adenosylcobalamin biosynthesis; cob(II)yrinate a,c-diamide from sirohydrochlorin (anaerobic route): step 6/10. Catalyzes the methylation of C-1 in cobalt-precorrin-5B to form cobalt-precorrin-6A. In Geotalea daltonii (strain DSM 22248 / JCM 15807 / FRC-32) (Geobacter daltonii), this protein is Cobalt-precorrin-5B C(1)-methyltransferase.